Reading from the N-terminus, the 208-residue chain is 3-demethoxyubiquinol 3-hydroxylase (208 aa).

Residues glutamate 57, glutamate 87, histidine 90, glutamate 139, glutamate 171, and histidine 174 each coordinate Fe cation.

It belongs to the COQ7 family. It depends on Fe cation as a cofactor.

Its subcellular location is the cell membrane. It catalyses the reaction a 5-methoxy-2-methyl-3-(all-trans-polyprenyl)benzene-1,4-diol + AH2 + O2 = a 3-demethylubiquinol + A + H2O. The protein operates within cofactor biosynthesis; ubiquinone biosynthesis. Catalyzes the hydroxylation of 2-nonaprenyl-3-methyl-6-methoxy-1,4-benzoquinol during ubiquinone biosynthesis. The polypeptide is 3-demethoxyubiquinol 3-hydroxylase (Burkholderia ambifaria (strain MC40-6)).